The chain runs to 648 residues: Biosynthetic arginine decarboxylase (648 aa).

Residue K109 is modified to N6-(pyridoxal phosphate)lysine. Residue 291 to 301 (IDVGGGLGIDF) coordinates substrate.

The protein belongs to the Orn/Lys/Arg decarboxylase class-II family. SpeA subfamily. It depends on Mg(2+) as a cofactor. The cofactor is pyridoxal 5'-phosphate.

The enzyme catalyses L-arginine + H(+) = agmatine + CO2. Its pathway is amine and polyamine biosynthesis; agmatine biosynthesis; agmatine from L-arginine: step 1/1. Catalyzes the biosynthesis of agmatine from arginine. This Prochlorococcus marinus (strain AS9601) protein is Biosynthetic arginine decarboxylase.